The chain runs to 269 residues: S-adenosylmethionine decarboxylase proenzyme (269 aa).

Ser-118 (schiff-base intermediate with substrate; via pyruvic acid) is an active-site residue. Position 118 is a pyruvic acid (Ser); by autocatalysis (Ser-118). Catalysis depends on His-123, which acts as the Proton acceptor; for processing activity. Cys-146 serves as the catalytic Proton donor; for catalytic activity.

This sequence belongs to the prokaryotic AdoMetDC family. Type 2 subfamily. Heterooctamer of four alpha and four beta chains arranged as a tetramer of alpha/beta heterodimers. Requires pyruvate as cofactor. Is synthesized initially as an inactive proenzyme. Formation of the active enzyme involves a self-maturation process in which the active site pyruvoyl group is generated from an internal serine residue via an autocatalytic post-translational modification. Two non-identical subunits are generated from the proenzyme in this reaction, and the pyruvate is formed at the N-terminus of the alpha chain, which is derived from the carboxyl end of the proenzyme. The post-translation cleavage follows an unusual pathway, termed non-hydrolytic serinolysis, in which the side chain hydroxyl group of the serine supplies its oxygen atom to form the C-terminus of the beta chain, while the remainder of the serine residue undergoes an oxidative deamination to produce ammonia and the pyruvoyl group blocking the N-terminus of the alpha chain.

The enzyme catalyses S-adenosyl-L-methionine + H(+) = S-adenosyl 3-(methylsulfanyl)propylamine + CO2. The protein operates within amine and polyamine biosynthesis; S-adenosylmethioninamine biosynthesis; S-adenosylmethioninamine from S-adenosyl-L-methionine: step 1/1. Catalyzes the decarboxylation of S-adenosylmethionine to S-adenosylmethioninamine (dcAdoMet), the propylamine donor required for the synthesis of the polyamines spermine and spermidine from the diamine putrescine. This is S-adenosylmethionine decarboxylase proenzyme from Brevibacillus brevis (strain 47 / JCM 6285 / NBRC 100599).